We begin with the raw amino-acid sequence, 161 residues long: Cytochrome c-type biogenesis protein CcmE (161 aa).

At 1–8 the chain is on the cytoplasmic side; sequence MNARRKKR. Residues 9–29 form a helical; Signal-anchor for type II membrane protein membrane-spanning segment; the sequence is LALATALIGGVAAIASLLLYA. Topologically, residues 30–161 are periplasmic; it reads LNSNLNLFYT…DYNAEQKSGY (132 aa). Residues H131 and Y135 each contribute to the heme site.

This sequence belongs to the CcmE/CycJ family.

It localises to the cell inner membrane. Heme chaperone required for the biogenesis of c-type cytochromes. Transiently binds heme delivered by CcmC and transfers the heme to apo-cytochromes in a process facilitated by CcmF and CcmH. In Shewanella woodyi (strain ATCC 51908 / MS32), this protein is Cytochrome c-type biogenesis protein CcmE.